The sequence spans 338 residues: Ketol-acid reductoisomerase (NADP(+)) (338 aa).

One can recognise a KARI N-terminal Rossmann domain in the interval 1–181 (MTVYYDKDCN…GGGRTAIIET (181 aa)). NADP(+)-binding positions include 24 to 27 (FGSQ), R47, S52, and 82 to 85 (DENQ). H107 is an active-site residue. Residue G133 participates in NADP(+) binding. The KARI C-terminal knotted domain maps to 182 to 327 (TFKDETETDL…VKLRTMMPWI (146 aa)). Residues D190, E194, E226, and E230 each contribute to the Mg(2+) site. Residue S251 coordinates substrate.

It belongs to the ketol-acid reductoisomerase family. The cofactor is Mg(2+).

It catalyses the reaction (2R)-2,3-dihydroxy-3-methylbutanoate + NADP(+) = (2S)-2-acetolactate + NADPH + H(+). The enzyme catalyses (2R,3R)-2,3-dihydroxy-3-methylpentanoate + NADP(+) = (S)-2-ethyl-2-hydroxy-3-oxobutanoate + NADPH + H(+). It functions in the pathway amino-acid biosynthesis; L-isoleucine biosynthesis; L-isoleucine from 2-oxobutanoate: step 2/4. The protein operates within amino-acid biosynthesis; L-valine biosynthesis; L-valine from pyruvate: step 2/4. Functionally, involved in the biosynthesis of branched-chain amino acids (BCAA). Catalyzes an alkyl-migration followed by a ketol-acid reduction of (S)-2-acetolactate (S2AL) to yield (R)-2,3-dihydroxy-isovalerate. In the isomerase reaction, S2AL is rearranged via a Mg-dependent methyl migration to produce 3-hydroxy-3-methyl-2-ketobutyrate (HMKB). In the reductase reaction, this 2-ketoacid undergoes a metal-dependent reduction by NADPH to yield (R)-2,3-dihydroxy-isovalerate. The protein is Ketol-acid reductoisomerase (NADP(+)) of Sulfurimonas denitrificans (strain ATCC 33889 / DSM 1251) (Thiomicrospira denitrificans (strain ATCC 33889 / DSM 1251)).